The chain runs to 349 residues: Small ribosomal subunit biogenesis GTPase RsgA (349 aa).

A disordered region spans residues 1–38; the sequence is MSKNKLSKGQERRVQANHQRRLKRTDNKPELDDSQLGE. A CP-type G domain is found at 102–272; the sequence is TSVLNRPDIY…VIDSPGVREF (171 aa). GTP contacts are provided by residues 158-161 and 212-220; these read NKID and GQSGVGKSS. Positions 296, 301, 303, and 309 each coordinate Zn(2+).

The protein belongs to the TRAFAC class YlqF/YawG GTPase family. RsgA subfamily. In terms of assembly, monomer. Associates with 30S ribosomal subunit, binds 16S rRNA. It depends on Zn(2+) as a cofactor.

Its subcellular location is the cytoplasm. Its function is as follows. One of several proteins that assist in the late maturation steps of the functional core of the 30S ribosomal subunit. Helps release RbfA from mature subunits. May play a role in the assembly of ribosomal proteins into the subunit. Circularly permuted GTPase that catalyzes slow GTP hydrolysis, GTPase activity is stimulated by the 30S ribosomal subunit. The polypeptide is Small ribosomal subunit biogenesis GTPase RsgA (Serratia proteamaculans (strain 568)).